A 164-amino-acid chain; its full sequence is Cytochrome c-type biogenesis protein CcmE (164 aa).

At 1–8 (MNPRRKSR) the chain is on the cytoplasmic side. The chain crosses the membrane as a helical; Signal-anchor for type II membrane protein span at residues 9–29 (LYLAVVVLIGIGLTTTLVLYA). Residues 30–164 (LRSNIDLFYT…NSTAAQGNAS (135 aa)) lie on the Periplasmic side of the membrane. Heme contacts are provided by His-130 and Tyr-134. The segment covering 131–150 (DEKYTPPEVKEAMKENHTRP) has biased composition (basic and acidic residues). Residues 131–164 (DEKYTPPEVKEAMKENHTRPAEAYNSTAAQGNAS) form a disordered region. The span at 154-164 (YNSTAAQGNAS) shows a compositional bias: polar residues.

The protein belongs to the CcmE/CycJ family.

It localises to the cell inner membrane. Heme chaperone required for the biogenesis of c-type cytochromes. Transiently binds heme delivered by CcmC and transfers the heme to apo-cytochromes in a process facilitated by CcmF and CcmH. The polypeptide is Cytochrome c-type biogenesis protein CcmE (Yersinia enterocolitica serotype O:8 / biotype 1B (strain NCTC 13174 / 8081)).